Consider the following 272-residue polypeptide: Phosphatidylglycerol--prolipoprotein diacylglyceryl transferase (272 aa).

4 helical membrane-spanning segments follow: residues 24–44, 59–79, 102–122, and 129–149; these read WYGIAYVLALLVALWVAKWIA, YFIWVEVGVILGARLGYILFY, FIGIRGMSYHGAVIGFLIASF, and GVKFWMLMDLVGISVPLGYVF. R151 lines the a 1,2-diacyl-sn-glycero-3-phospho-(1'-sn-glycerol) pocket. Helical transmembrane passes span 180–200, 208–228, and 244–264; these read PSQLYEAFLEGIVLFVILYAW, GQLGIMYLILYALARFVAEFW, and MGQLLSLAMAIPCLVLWGYLA.

It belongs to the Lgt family.

It localises to the cell inner membrane. The enzyme catalyses L-cysteinyl-[prolipoprotein] + a 1,2-diacyl-sn-glycero-3-phospho-(1'-sn-glycerol) = an S-1,2-diacyl-sn-glyceryl-L-cysteinyl-[prolipoprotein] + sn-glycerol 1-phosphate + H(+). It functions in the pathway protein modification; lipoprotein biosynthesis (diacylglyceryl transfer). Functionally, catalyzes the transfer of the diacylglyceryl group from phosphatidylglycerol to the sulfhydryl group of the N-terminal cysteine of a prolipoprotein, the first step in the formation of mature lipoproteins. The chain is Phosphatidylglycerol--prolipoprotein diacylglyceryl transferase from Wolinella succinogenes (strain ATCC 29543 / DSM 1740 / CCUG 13145 / JCM 31913 / LMG 7466 / NCTC 11488 / FDC 602W) (Vibrio succinogenes).